The sequence spans 87 residues: uncharacterized protein (87 aa).

Residues 1–23 (MAVSVLRLTVVLGLLVLFLTCYA) form the signal peptide. The disordered stretch occupies residues 24-44 (DDKPDKPDDKPDDSGKDPKPD).

It is found in the secreted. This is an uncharacterized protein from Homo sapiens (Human).